The chain runs to 468 residues: 6-phospho-beta-galactosidase (468 aa).

D-galactose 6-phosphate-binding residues include glutamine 19, histidine 116, asparagine 159, glutamate 160, and asparagine 297. The active-site Proton donor is the glutamate 160. Glutamate 375 acts as the Nucleophile in catalysis. D-galactose 6-phosphate contacts are provided by serine 428, tryptophan 429, lysine 435, and tyrosine 437.

This sequence belongs to the glycosyl hydrolase 1 family.

The catalysed reaction is a 6-phospho-beta-D-galactoside + H2O = D-galactose 6-phosphate + an alcohol. The protein operates within carbohydrate metabolism; lactose degradation; D-galactose 6-phosphate and beta-D-glucose from lactose 6-phosphate: step 1/1. The polypeptide is 6-phospho-beta-galactosidase (Streptococcus gordonii (strain Challis / ATCC 35105 / BCRC 15272 / CH1 / DL1 / V288)).